The sequence spans 247 residues: Probable transcriptional regulatory protein YPO2055/y2255/YP_1898 (247 aa).

Belongs to the TACO1 family.

Its subcellular location is the cytoplasm. The protein is Probable transcriptional regulatory protein YPO2055/y2255/YP_1898 of Yersinia pestis.